A 364-amino-acid polypeptide reads, in one-letter code: 1-aminocyclopropane-1-carboxylate oxidase homolog 11 (364 aa).

Residues 213-312 enclose the Fe2OG dioxygenase domain; it reads KSLLMICHYY…RISVASFFSS (100 aa). Positions 237, 239, and 293 each coordinate Fe cation. R303 is a 2-oxoglutarate binding site.

Belongs to the iron/ascorbate-dependent oxidoreductase family. Fe(2+) is required as a cofactor.

This is 1-aminocyclopropane-1-carboxylate oxidase homolog 11 from Arabidopsis thaliana (Mouse-ear cress).